The sequence spans 129 residues: MKALGYWLMVVGSLRLASVWFGFFNIWALRLAVFSQTTMSEVHGRTFGVWTLLTCTLCFLCAFNLENKPLYLATFLSFIYALGHFLTEYLFYQTMTIANLSTVGFFAGTSIVWMLLEWNSLEQPHSKLS.

Helical transmembrane passes span 4–24 (LGYWLMVVGSLRLASVWFGFF), 46–66 (TFGVWTLLTCTLCFLCAFNLE), 71–91 (YLATFLSFIYALGHFLTEYLF), and 96–116 (TIANLSTVGFFAGTSIVWMLL).

This sequence belongs to the ERG28 family.

It localises to the endoplasmic reticulum membrane. This chain is Ergosterol biosynthetic protein 28, found in Arabidopsis thaliana (Mouse-ear cress).